Reading from the N-terminus, the 5571-residue chain is Polyketide synthase GfsB (5571 aa).

The interval 1-27 is disordered; it reads MSVPPPGATPSRTSRTKGLKDRPRMEN. Residues 18–27 show a composition bias toward basic and acidic residues; that stretch reads GLKDRPRMEN. Residues 57-483 form the Ketosynthase family 3 (KS3) 1 domain; sequence QEPVAIIGMS…GTNAHVIIEQ (427 aa). Module stretches follow at residues 57-2148, 2167-3728, and 3746-5485; these read QEPV…RDTL, DEPL…GSQV, and DEPV…HTHL. Residues cysteine 230, histidine 365, and histidine 405 each act as for beta-ketoacyl synthase 1 activity in the active site. Residues 485–518 form a disordered region; the sequence is PAIEGTGLGDDAPPTAEHPEERTPADGGPAPQPV. In terms of domain architecture, Malonyl-CoA:ACP transacylase (MAT) 1 spans 611–926; sequence FVFPGQGSQW…LRSLAEAYAH (316 aa). Residues 976 to 1109 form an N-terminal hotdog fold 1 region; the sequence is HPLLAAATSL…GYLAVGAHEP (134 aa). In terms of domain architecture, PKS/mFAS DH 1 spans 976-1264; that stretch reads HPLLAAATSL…LRPLATNQAP (289 aa). The active-site Proton acceptor; for dehydratase activity 1 is the histidine 1008. A C-terminal hotdog fold 1 region spans residues 1122-1264; it reads ATPLDVTDLY…LRPLATNQAP (143 aa). Aspartate 1183 acts as the Proton donor; for dehydratase activity 1 in catalysis. Residues 1478-1777 enclose the Enoyl reductase (ER) domain; it reads GTLDHLTLIP…QARHIGKIVL (300 aa). One can recognise a Ketoreductase (KR) 1 domain in the interval 1787–1966; that stretch reads GTVLVTGATG…TSLAWGLWEE (180 aa). Residues 2073 to 2148 form the Carrier 1 domain; it reads RIVNDLVRDH…ELAAHLRDTL (76 aa). Serine 2108 carries the post-translational modification O-(pantetheine 4'-phosphoryl)serine. The Ketosynthase family 3 (KS3) 2 domain maps to 2167–2593; sequence DEPLAVVAMS…GTNAHVILEQ (427 aa). Active-site for beta-ketoacyl synthase 2 activity residues include cysteine 2340, histidine 2475, and histidine 2515. One can recognise a Malonyl-CoA:ACP transacylase (MAT) 2 domain in the interval 2710–3016; sequence VFSGQGSQRP…AAVALQRGNR (307 aa). Residues 3373 to 3551 enclose the Ketoreductase (KR) 2 domain; that stretch reads GTVLVTGGTG…VSVAWGPWAE (179 aa). Residues 3653-3728 enclose the Carrier 2 domain; sequence TALLDLVRGQ…ALAEYVGSQV (76 aa). Serine 3688 carries the post-translational modification O-(pantetheine 4'-phosphoryl)serine. In terms of domain architecture, Ketosynthase family 3 (KS3) 3 spans 3746–4172; sequence DEPVAIIGMS…GTNAHVILEQ (427 aa). Active-site for beta-ketoacyl synthase 3 activity residues include cysteine 3919, histidine 4054, and histidine 4094. Residues 4279–4601 enclose the Malonyl-CoA:ACP transacylase (MAT) 3 domain; it reads FLFSGQGSQR…ATAHVNGVQP (323 aa). The N-terminal hotdog fold 2 stretch occupies residues 4649 to 4774; sequence HPLLAGVVDL…GALTVAEAVD (126 aa). In terms of domain architecture, PKS/mFAS DH 2 spans 4649–4931; the sequence is HPLLAGVVDL…TRPIAAGQLA (283 aa). Histidine 4681 acts as the Proton acceptor; for dehydratase activity 2 in catalysis. A C-terminal hotdog fold 2 region spans residues 4787 to 4931; that stretch reads AIEVELDDPY…TRPIAAGQLA (145 aa). Aspartate 4848 functions as the Proton donor; for dehydratase activity 2 in the catalytic mechanism. Residues 5134 to 5306 form the Ketoreductase (KR) 3 domain; sequence LLVTGASGVL…TSLSWGLWAE (173 aa). In terms of domain architecture, Carrier 3 spans 5410-5485; it reads RMVLDLVRDR…ALARYLHTHL (76 aa). O-(pantetheine 4'-phosphoryl)serine is present on serine 5445.

Pantetheine 4'-phosphate is required as a cofactor.

It participates in antibiotic biosynthesis. Second protein in the synthesis of the 16-membered macrolide antibiotics FD-891 and FD-892. Composed of 3 modules. Modifies the product of GfsA by multiple rounds of addition of malonyl-CoA or methylmalonyl-CoA and other modifications to help generate the final products. The protein is Polyketide synthase GfsB of Streptomyces halstedii.